We begin with the raw amino-acid sequence, 356 residues long: Aromatic dipeptide epimerase (356 aa).

Substrate-binding positions include T136 and 161–163; that span reads KVK. 3 residues coordinate Mg(2+): D191, E219, and D244. Residues K268 and 320–322 contribute to the substrate site; that span reads DLD.

This sequence belongs to the mandelate racemase/muconate lactonizing enzyme family. It depends on Mg(2+) as a cofactor.

Functionally, has epimerase activity with a variety of hydrophobic dipeptides (in vitro). Enzyme activity is highest with L-Phe-L-Tyr, but is still relatively low, suggesting that L-Phe-L-Tyr is not the physiological substrate. In Herpetosiphon aurantiacus (strain ATCC 23779 / DSM 785 / 114-95), this protein is Aromatic dipeptide epimerase.